The chain runs to 382 residues: Galactokinase (382 aa).

34-37 (EHTD) is a binding site for substrate. 124–130 (GAGLSSS) is an ATP binding site. Ser130 and Glu162 together coordinate Mg(2+). Asp174 functions as the Proton acceptor in the catalytic mechanism. Tyr223 contacts substrate.

This sequence belongs to the GHMP kinase family. GalK subfamily.

The protein localises to the cytoplasm. It catalyses the reaction alpha-D-galactose + ATP = alpha-D-galactose 1-phosphate + ADP + H(+). It participates in carbohydrate metabolism; galactose metabolism. In terms of biological role, catalyzes the transfer of the gamma-phosphate of ATP to D-galactose to form alpha-D-galactose-1-phosphate (Gal-1-P). This chain is Galactokinase, found in Escherichia coli O157:H7 (strain EC4115 / EHEC).